We begin with the raw amino-acid sequence, 383 residues long: Polyketide synthase 4 (383 aa).

The Nucleophile and monoketide coumarate intermediate role is filled by cysteine 164.

Belongs to the thiolase-like superfamily. Chalcone/stilbene synthases family. Homodimer. As to expression, expressed in fruits.

The catalysed reaction is 4-coumaroyl-CoA + malonyl-CoA + H2O + H(+) = 4-hydroxybenzalacetone + 2 CO2 + 2 CoA. It carries out the reaction (E)-4-coumaroyl-CoA + 3 malonyl-CoA + 3 H(+) = 2',4,4',6'-tetrahydroxychalcone + 3 CO2 + 4 CoA. The protein operates within secondary metabolite biosynthesis; flavonoid biosynthesis. Its activity is regulated as follows. Inhibited by glutathione. In terms of biological role, bifunctional polyketide synthase producing both 4-hydroxybenzalacetone and naringenin chalcone. Can use p-coumaryl-CoA and ferulyl-CoA as substrates. Catalyzes the initial key reaction step in the biosynthesis of phenylbutanoids. This Rubus idaeus (Raspberry) protein is Polyketide synthase 4 (PKS4).